We begin with the raw amino-acid sequence, 126 residues long: SGSCTVKTCWMRLPTFRTVGNLLKERFDGASRVIYGNKGSNRASRADMRHLEPEDPAHKPHSPQDLVYFERSPNFCAANSKVGTAGTTGRACNNTSLGLDGCDLLCCGRGFRTLTERVTERCHCTF.

A lipid anchor (O-palmitoleoyl serine; by PORCN) is attached at serine 1. Cysteine 92 and cysteine 107 are joined by a disulfide. 2 N-linked (GlcNAc...) asparagine glycosylation sites follow: asparagine 93 and asparagine 94.

The protein belongs to the Wnt family. Post-translationally, palmitoleoylation is required for efficient binding to frizzled receptors. Palmitoleoylation is necessary for proper trafficking to cell surface. Depalmitoleoylated by NOTUM, leading to inhibit Wnt signaling pathway.

It is found in the secreted. The protein localises to the extracellular space. It localises to the extracellular matrix. Functionally, ligand for members of the frizzled family of seven transmembrane receptors. Probable developmental protein. This Alopias vulpinus (Common thresher shark) protein is Protein Wnt-1 (WNT-1).